We begin with the raw amino-acid sequence, 315 residues long: Ribosomal RNA small subunit methyltransferase H (315 aa).

Residues 33–35 (GGH), Asp-52, Phe-84, Asp-106, and Gln-113 contribute to the S-adenosyl-L-methionine site. Residues 294 to 315 (SSDELEENNRSHSAKLRVAEKL) are disordered.

It belongs to the methyltransferase superfamily. RsmH family.

The protein resides in the cytoplasm. It catalyses the reaction cytidine(1402) in 16S rRNA + S-adenosyl-L-methionine = N(4)-methylcytidine(1402) in 16S rRNA + S-adenosyl-L-homocysteine + H(+). Functionally, specifically methylates the N4 position of cytidine in position 1402 (C1402) of 16S rRNA. This chain is Ribosomal RNA small subunit methyltransferase H, found in Lactobacillus johnsonii (strain CNCM I-12250 / La1 / NCC 533).